The primary structure comprises 290 residues: tRNA(Ile)-lysidine synthase (290 aa).

12–17 (SGGSDS) is an ATP binding site.

The protein belongs to the tRNA(Ile)-lysidine synthase family.

It localises to the cytoplasm. It catalyses the reaction cytidine(34) in tRNA(Ile2) + L-lysine + ATP = lysidine(34) in tRNA(Ile2) + AMP + diphosphate + H(+). Ligates lysine onto the cytidine present at position 34 of the AUA codon-specific tRNA(Ile) that contains the anticodon CAU, in an ATP-dependent manner. Cytidine is converted to lysidine, thus changing the amino acid specificity of the tRNA from methionine to isoleucine. This Mycoplasma genitalium (strain ATCC 33530 / DSM 19775 / NCTC 10195 / G37) (Mycoplasmoides genitalium) protein is tRNA(Ile)-lysidine synthase.